A 357-amino-acid chain; its full sequence is Homeobox protein HMX3 (357 aa).

Disordered stretches follow at residues 1–58 (MPEP…LFAP) and 129–229 (LPRP…RKKK). The segment covering 16–27 (PQPPPPPPPAPK) has biased composition (pro residues). Basic and acidic residues-rich tracts occupy residues 130-140 (PRPEASEKALL) and 149-173 (TDRD…KSPD). Ser153 and Ser180 each carry phosphoserine. The segment covering 191–209 (AAPGAAGASVGAAAATPGA) has biased composition (low complexity). Residues 210–223 (EDWKKGAESPEKKP) are compositionally biased toward basic and acidic residues. The segment at residues 227 to 286 (KKKTRTVFSRSQVFQLESTFDMKRYLSSSERAGLAASLHLTETQVKIWFQNRRNKWKRQL) is a DNA-binding region (homeobox).

This sequence belongs to the HMX homeobox family.

The protein localises to the nucleus. In terms of biological role, transcription factor involved in specification of neuronal cell types and which is required for inner ear and hypothalamus development. Binds to the 5'-CAAGTG-3' core sequence. Controls semicircular canal formation in the inner ear. Also required for hypothalamic/pituitary axis of the CNS. This chain is Homeobox protein HMX3 (HMX3), found in Homo sapiens (Human).